The sequence spans 616 residues: tRNA 5-methylaminomethyl-2-thiouridine biosynthesis bifunctional protein MnmC (616 aa).

Positions 1-232 are tRNA (mnm(5)s(2)U34)-methyltransferase; that stretch reads MLRTIVPARL…KRHCMSARFA (232 aa). The segment at 249–616 is FAD-dependent cmnm(5)s(2)U34 oxidoreductase; it reads IGGGVAGAAA…ARFAGNRKTA (368 aa).

It in the N-terminal section; belongs to the methyltransferase superfamily. tRNA (mnm(5)s(2)U34)-methyltransferase family. The protein in the C-terminal section; belongs to the DAO family. It depends on FAD as a cofactor.

It localises to the cytoplasm. The catalysed reaction is 5-aminomethyl-2-thiouridine(34) in tRNA + S-adenosyl-L-methionine = 5-methylaminomethyl-2-thiouridine(34) in tRNA + S-adenosyl-L-homocysteine + H(+). Its function is as follows. Catalyzes the last two steps in the biosynthesis of 5-methylaminomethyl-2-thiouridine (mnm(5)s(2)U) at the wobble position (U34) in tRNA. Catalyzes the FAD-dependent demodification of cmnm(5)s(2)U34 to nm(5)s(2)U34, followed by the transfer of a methyl group from S-adenosyl-L-methionine to nm(5)s(2)U34, to form mnm(5)s(2)U34. The polypeptide is tRNA 5-methylaminomethyl-2-thiouridine biosynthesis bifunctional protein MnmC (Thiobacillus denitrificans (strain ATCC 25259 / T1)).